The sequence spans 356 residues: MDTQGPVSQPFQQPEKPGRVRRRKTRRERNKALVGSRRPLAHHDPPVAIRDPPVVPTASKLVVITQGRLSREHRGLFNHEVKSLDVARLLSSGTLVPGSPTLPAKPSPSPGRAQEPAPRSRDKENQVPGGSGPGPPSSPELSGVGQLLAELQCQLSLPQAFPRRNLIQDARDAIVHTLQACHGCVPDLALVLRGCQPPLPGAKPGVSERKMTPFWINSPDQVPEQERQRKQQGTKEFTFPMPYTSSMPTAHRGSLAPPRGPWPPYFPSLSSPSGTAWGPPTAFDLLKSIWLVATPPPPRPWGVGLPQPLPQPSSPLLPRTSVLDWSPSPPSPLPSLSWVVAQSSPEAWSFPPMRLY.

Residues 1 to 12 (MDTQGPVSQPFQ) are compositionally biased toward polar residues. 4 disordered regions span residues 1-53 (MDTQ…RDPP), 95-143 (LVPG…ELSG), 216-255 (INSP…RGSL), and 312-331 (PSSP…SPPS). Over residues 19–29 (RVRRRKTRRER) the composition is skewed to basic residues.

As to quaternary structure, interacts with CNTD1.

The protein localises to the nucleus. The protein resides in the chromosome. In terms of biological role, promotes meiotic crossing over formation through its interaction with CNTD1 by participating in the crossover differentiation step of crossover-specific recombination intermediates. This chain is Proline-rich protein 19, found in Homo sapiens (Human).